Here is a 402-residue protein sequence, read N- to C-terminus: Methylthioribose-1-phosphate isomerase (402 aa).

The active-site Proton donor is the Asp-275.

It belongs to the eIF-2B alpha/beta/delta subunits family. MtnA subfamily.

Its subcellular location is the cytoplasm. The protein resides in the nucleus. The catalysed reaction is 5-(methylsulfanyl)-alpha-D-ribose 1-phosphate = 5-(methylsulfanyl)-D-ribulose 1-phosphate. It functions in the pathway amino-acid biosynthesis; L-methionine biosynthesis via salvage pathway; L-methionine from S-methyl-5-thio-alpha-D-ribose 1-phosphate: step 1/6. In terms of biological role, catalyzes the interconversion of methylthioribose-1-phosphate (MTR-1-P) into methylthioribulose-1-phosphate (MTRu-1-P). The protein is Methylthioribose-1-phosphate isomerase of Clavispora lusitaniae (strain ATCC 42720) (Yeast).